Reading from the N-terminus, the 212-residue chain is MSDPTIRPQSELTPGDFTAAENPFALFAEWLAEANKSEPNDPNAMALATVDPDGLPDVRMVLMKGYDEHGFVFYSHIASQKGRELAANPKAALLFHWKSLRRQIRIRGTVTPVTDTEADAYFATRPKQAQIGAWASKQSQPLESRFAFEQAIAKVTARHLIGDVPRPPGWSGWRITPSRIEFWHDRPFRLHDRIEFRRDTPDHPWTKTRLYP.

Residues 59–64 (RMVLMK), 74–75 (YS), K81, and Q103 contribute to the FMN site. K64 lines the substrate pocket. Substrate is bound by residues Y121 and R125. FMN is bound by residues 138–139 (QS) and W183. 189-191 (RLH) provides a ligand contact to substrate. Residue R193 coordinates FMN.

This sequence belongs to the pyridoxamine 5'-phosphate oxidase family. Homodimer. It depends on FMN as a cofactor.

The catalysed reaction is pyridoxamine 5'-phosphate + O2 + H2O = pyridoxal 5'-phosphate + H2O2 + NH4(+). It carries out the reaction pyridoxine 5'-phosphate + O2 = pyridoxal 5'-phosphate + H2O2. Its pathway is cofactor metabolism; pyridoxal 5'-phosphate salvage; pyridoxal 5'-phosphate from pyridoxamine 5'-phosphate: step 1/1. The protein operates within cofactor metabolism; pyridoxal 5'-phosphate salvage; pyridoxal 5'-phosphate from pyridoxine 5'-phosphate: step 1/1. Functionally, catalyzes the oxidation of either pyridoxine 5'-phosphate (PNP) or pyridoxamine 5'-phosphate (PMP) into pyridoxal 5'-phosphate (PLP). This Rhodopseudomonas palustris (strain TIE-1) protein is Pyridoxine/pyridoxamine 5'-phosphate oxidase.